A 422-amino-acid polypeptide reads, in one-letter code: Cytochrome P-450 monooxygenase DoxA (422 aa).

Position 369 (Cys369) interacts with heme.

This sequence belongs to the cytochrome P450 family. As to quaternary structure, monomer. Requires heme as cofactor.

It localises to the cytoplasm. It catalyses the reaction 13-deoxydaunorubicin + NADPH + O2 + H(+) = 13-dihydrodaunorubicin + NADP(+) + H2O. The catalysed reaction is 13-dihydrodaunorubicin + NADPH + O2 + H(+) = daunorubicin + NADP(+) + 2 H2O. The enzyme catalyses 13-deoxycarminomycin + NADPH + O2 + H(+) = 13-dihydrocarminomycin + NADP(+) + H2O. It carries out the reaction 13-dihydrocarminomycin + NADPH + O2 + H(+) = carminomycin + NADP(+) + 2 H2O. It functions in the pathway antibiotic biosynthesis; daunorubicin biosynthesis. It participates in antibiotic biosynthesis; carminomycin biosynthesis. Its activity is regulated as follows. Strongly inhibited by dithiothreitol and high ionic strength buffers. Involved in the biosynthesis of the anthracyclines carminomycin and daunorubicin (daunomycin) which are aromatic polyketide antibiotics that exhibit high cytotoxicity and are widely applied in the chemotherapy of a variety of cancers. In vivo, DoxA catalyzes the C-13 hydroxylation of 13-deoxycarminomycin and 13-deoxydaunorubicin to yield 13-dihydrocarminomycin and 13-dihydrodaunorubicin, respectively, as well as the oxidation of these 13-dihydro-anthracyclines to their respective 13-keto forms, carminomycin and daunorubicin. In vitro, it also catalyzes the C-14 hydroxylation of daunorubicin to form doxorubicin (adriamycin), although this strain is not a doxorubicin producer. It is not able to accept anthracyclinones (aglycones) and anthracyclines with a 10-carbomethoxyl moiety. 13-oxidation of the anthracyclines possessing the 4-methoxy substitution is greatly favored. The anthracycline analog desacetyladriamycin can be oxidized to 10-hydroxydesacetyladriamycin. It can only use NADP. DoxA acts jointly with DauV. This Streptomyces sp. (strain C5) protein is Cytochrome P-450 monooxygenase DoxA (doxA).